The chain runs to 275 residues: T-cell ecto-ADP-ribosyltransferase 1 (275 aa).

The signal sequence occupies residues 1–20 (MPSNICKFFLTWWLIQQVTG). 2 disulfides stabilise this stretch: Cys41–Cys243 and Cys141–Cys193. The N-linked (GlcNAc...) asparagine glycan is linked to Asn58. In terms of domain architecture, TR mART core spans 61–238 (EKLKVAWEEA…IFLDSPKRKK (178 aa)). Residues Tyr98, Arg146, and Gln164 each contribute to the NAD(+) site. Arg146 is a catalytic residue. The active site involves Ser167. Residue Ser202 participates in NAD(+) binding. Glu209 is an active-site residue. Ser246 is lipidated: GPI-anchor amidated serine. Residues 247–275 (SAGTRESCVSLFLVVLTSLLVQLLCLAEP) constitute a propeptide, removed in mature form.

It belongs to the Arg-specific ADP-ribosyltransferase family. Postthymic T-cells.

The protein resides in the cell membrane. The catalysed reaction is L-arginyl-[protein] + NAD(+) = N(omega)-(ADP-D-ribosyl)-L-arginyl-[protein] + nicotinamide + H(+). It catalyses the reaction NAD(+) + H2O = ADP-D-ribose + nicotinamide + H(+). Its function is as follows. Has NAD(+) glycohydrolase activity and extremely low ADP-ribosyltransferase activity. The sequence is that of T-cell ecto-ADP-ribosyltransferase 1 (Art2a) from Rattus norvegicus (Rat).